The sequence spans 411 residues: MYPNPLIYCTCWDPWNLGPRKLIKTPHPLPKASIRKPIFPAPISREPNYLLSQPAKSTAFPRDKAQSRKLEESNKAPSEVIEVSPGYKLVRNREQISVTLGDEMFSRKKHLESGILSKVKISRSDIISDLEEQISELSAIIEQMNRDHQSAQKLLSNEMDLRCADMKQKFETESRELKQTHKEQLEKLENSYKETLKVEKAAAQEKLDEMGKEYKYLKNMFHMYQDSIYDEMEDKWSRRKAEWEKDEKMEREKILLQQKHRITKKFELESEEEKRKMNESFSTVMENFTREKEELIRQHNEDILQMQELRKAKEILEAELRTQAVVLETLNTSLYHCQIELQREKTMAGNLEKLFQTKLAEAEEKYKSTIQVLTEENNSLRQKVLTISTNEEIFEERSEKSSSASPNIYES.

The tract at residues 52–77 (SQPAKSTAFPRDKAQSRKLEESNKAP) is disordered. Over residues 61 to 74 (PRDKAQSRKLEESN) the composition is skewed to basic and acidic residues. 2 coiled-coil regions span residues 124–220 (SDII…LKNM) and 278–328 (NESF…VVLE). Lys-353 carries the N6-acetyllysine modification. The stretch at 355–385 (FQTKLAEAEEKYKSTIQVLTEENNSLRQKVL) forms a coiled coil.

The protein localises to the cytoplasm. It localises to the cytoplasmic granule. The protein resides in the cell projection. Its subcellular location is the cilium. It is found in the flagellum. This Rattus norvegicus (Rat) protein is Flagellum-associated coiled-coil domain-containing protein 1.